A 255-amino-acid chain; its full sequence is Zinc import ATP-binding protein ZnuC (255 aa).

The 216-residue stretch at 5–220 (VALEHIAVAF…PDFIAMFGYR (216 aa)) folds into the ABC transporter domain.

It belongs to the ABC transporter superfamily. Zinc importer (TC 3.A.1.15.5) family. As to quaternary structure, the complex is composed of two ATP-binding proteins (ZnuC), two transmembrane proteins (ZnuB) and a solute-binding protein (ZnuA).

The protein resides in the cell inner membrane. The catalysed reaction is Zn(2+)(out) + ATP(in) + H2O(in) = Zn(2+)(in) + ADP(in) + phosphate(in) + H(+)(in). Functionally, part of the ABC transporter complex ZnuABC involved in zinc import. Responsible for energy coupling to the transport system. The polypeptide is Zinc import ATP-binding protein ZnuC (Sodalis glossinidius (strain morsitans)).